The chain runs to 749 residues: NAD(P)H-quinone oxidoreductase subunit 5, chloroplastic (749 aa).

The next 16 helical transmembrane spans lie at 9–29 (WIIPFLPLPIPMLLGVGLLLF), 40–60 (WSFTSVLLLSIVMTFSVNLSI), 89–109 (IDPLTSIMSILITTVGIMVLI), 125–145 (FAYMSFFNASMLGLVTSSNLI), 147–167 (IYIFWELVGMCSYLLIGFWFT), 185–205 (GDFGLLLGILGLYWITGSFEF), 221–241 (NGTNFLFVSLCALFLFVGAVA), 260–280 (TPISALIHAATMVAAGIFLVA), 285–305 (LFIVIPYIMNLISLIGIITIL), 329–349 (LGYTMLALGMGSYRAALFHLI), 356–376 (ALLFLGSGSIIHSMEAIVGYS), 398–418 (NTFLLGTLSLCGIPPLACFWS), 427–447 (WLYSPIFAIIACLTAGLTAFY), 553–573 (LFPLFALALFTLFVGAIGIPF), 607–627 (FVINAIFSVSISYFGIFLASL), and 727–747 (SYLFLYLSSVSILLLISYFFL).

Belongs to the complex I subunit 5 family. In terms of assembly, NDH is composed of at least 16 different subunits, 5 of which are encoded in the nucleus.

Its subcellular location is the plastid. It is found in the chloroplast thylakoid membrane. It catalyses the reaction a plastoquinone + NADH + (n+1) H(+)(in) = a plastoquinol + NAD(+) + n H(+)(out). It carries out the reaction a plastoquinone + NADPH + (n+1) H(+)(in) = a plastoquinol + NADP(+) + n H(+)(out). Its function is as follows. NDH shuttles electrons from NAD(P)H:plastoquinone, via FMN and iron-sulfur (Fe-S) centers, to quinones in the photosynthetic chain and possibly in a chloroplast respiratory chain. The immediate electron acceptor for the enzyme in this species is believed to be plastoquinone. Couples the redox reaction to proton translocation, and thus conserves the redox energy in a proton gradient. In Vitis vinifera (Grape), this protein is NAD(P)H-quinone oxidoreductase subunit 5, chloroplastic (ndhF).